The chain runs to 602 residues: Probable pectinesterase/pectinesterase inhibitor 64 (602 aa).

Residues 36–56 (ILIIIAASCILLLLISLLIYA) traverse the membrane as a helical segment. Residues 62-91 (SRNHHNPSHQTPTSDDHPPPETPPSPPPIA) are disordered. A compositionally biased stretch (pro residues) spans 81–90 (PETPPSPPPI). Residues 87 to 237 (PPPIAQIRLA…VNLTGNALSM (151 aa)) form a pectinesterase inhibitor 64 region. N-linked (GlcNAc...) asparagine glycans are attached at residues Asn-98, Asn-156, Asn-212, Asn-229, and Asn-315. Residues 288-595 (DVTVCKNGGK…YSVANFIQAD (308 aa)) are pectinesterase 64. Substrate is bound by residues Thr-367 and Gln-397. Asp-420 acts as the Proton donor; for pectinesterase activity in catalysis. Residues Cys-434 and Cys-454 are joined by a disulfide bond. Residue Asp-441 is the Nucleophile; for pectinesterase activity of the active site. N-linked (GlcNAc...) asparagine glycosylation is found at Asn-492 and Asn-496. Substrate-binding residues include Arg-518 and Trp-520.

It in the N-terminal section; belongs to the PMEI family. The protein in the C-terminal section; belongs to the pectinesterase family. Expressed in siliques.

It is found in the membrane. It carries out the reaction [(1-&gt;4)-alpha-D-galacturonosyl methyl ester](n) + n H2O = [(1-&gt;4)-alpha-D-galacturonosyl](n) + n methanol + n H(+). The protein operates within glycan metabolism; pectin degradation; 2-dehydro-3-deoxy-D-gluconate from pectin: step 1/5. Acts in the modification of cell walls via demethylesterification of cell wall pectin. The protein is Probable pectinesterase/pectinesterase inhibitor 64 (PME64) of Arabidopsis thaliana (Mouse-ear cress).